The primary structure comprises 312 residues: MNEEVEDGEVKPLELSSEDKAILVETLKNKLQALAEQHVDVLESLAPSVRKRVDVLMEIQSQHDELEVKFFEEKAALEAKYQKLYGPLYSKRSKIVSGVLEVQGETEEREEKGVPDFWLNAMKNNEILAEEIHESDEEALKYLKDIKWCRIDDPKGFKFEFFFYTNPFFKNQVLTKTYHMIDEDDEPILEKAIGTEIEWHPGYCLTQEVLTKESSESTKPITKTEECESFFNFFSPPQVPDDDAKIDENTAEELQNQMERDYDIASTLRDKIIPHAVSWFTREAVQDEDYGASWVDDEEEDDNNDEYSDEEA.

A coiled-coil region spans residues valine 24–glutamate 78. The Nuclear export signal signature appears at leucine 45–glutamine 60. The interval aspartate 289–alanine 312 is disordered.

This sequence belongs to the nucleosome assembly protein (NAP) family.

The protein localises to the nucleus. It is found in the cytoplasm. May modulate chromatin structure by regulation of nucleosome assembly/disassembly. This chain is Nucleosome assembly protein 1-like 4, found in Oryza sativa subsp. japonica (Rice).